The chain runs to 427 residues: Peptidase B (427 aa).

The Mn(2+) site is built by Lys195 and Asp200. Residue Lys207 is part of the active site. 3 residues coordinate Mn(2+): Asp218, Asp277, and Glu279. Arg281 is an active-site residue.

The protein belongs to the peptidase M17 family. As to quaternary structure, homohexamer. Mn(2+) serves as cofactor.

The protein resides in the cytoplasm. It catalyses the reaction Release of an N-terminal amino acid, Xaa, from a peptide or arylamide. Xaa is preferably Glu or Asp but may be other amino acids, including Leu, Met, His, Cys and Gln.. Probably plays an important role in intracellular peptide degradation. The sequence is that of Peptidase B from Escherichia coli (strain SE11).